Consider the following 678-residue polypeptide: Dihydroxyacetone phosphate acyltransferase (678 aa).

2 positions are modified to phosphoserine: serine 12 and serine 17. The HXXXXD motif signature appears at 161–166 (HRSYID). The residue at position 641 (lysine 641) is an N6-acetyllysine. The short motif at 676-678 (AKL) is the Microbody targeting signal element.

Belongs to the GPAT/DAPAT family. In terms of assembly, part of a heterotrimeric complex composed of GNPAT, AGPS and a modified form of GNPAT. Highly expressed in liver and testis. Lower levels in heart, brain, lung and kidney. Detected in spleen.

The protein localises to the peroxisome membrane. The enzyme catalyses dihydroxyacetone phosphate + an acyl-CoA = a 1-acylglycerone 3-phosphate + CoA. The catalysed reaction is dihydroxyacetone phosphate + hexadecanoyl-CoA = 1-hexadecanoylglycerone 3-phosphate + CoA. It participates in membrane lipid metabolism; glycerophospholipid metabolism. Functionally, dihydroxyacetonephosphate acyltransferase catalyzing the first step in the biosynthesis of plasmalogens, a subset of phospholipids that differ from other glycerolipids by having an alkyl chain attached through a vinyl ether linkage at the sn-1 position of the glycerol backbone, and which unique physical properties have an impact on various aspects of cell signaling and membrane biology. The chain is Dihydroxyacetone phosphate acyltransferase from Mus musculus (Mouse).